Here is a 380-residue protein sequence, read N- to C-terminus: Apelin receptor (380 aa).

Over 1–30 (MEEGGDFDNYYGADNQSECEYTDWKSSGAL) the chain is Extracellular. Residue asparagine 15 is glycosylated (N-linked (GlcNAc...) asparagine). 2 disulfides stabilise this stretch: cysteine 19/cysteine 281 and cysteine 102/cysteine 181. Residues 31 to 54 (IPAIYMLVFLLGTTGNGLVLWTVF) traverse the membrane as a helical segment. At 55–64 (RSSREKRRSA) the chain is on the cytoplasmic side. Residues 65-86 (DIFIASLAVADLTFVVTLPLWA) form a helical membrane-spanning segment. Over 87-99 (TYTYRDYDWPFGT) the chain is Extracellular. A helical membrane pass occupies residues 100-125 (FFCKLSSYLIFVNMYASVFCLTGLSF). Over 126–146 (DRYLAIVRPVANARLRLRVSG) the chain is Cytoplasmic. The chain crosses the membrane as a helical span at residues 147–164 (AVATAVLWVLAALLAMPV). The Extracellular segment spans residues 165-198 (MVLRTTGDLENTTKVQCYMDYSMVATVSSEWAWE). Residue asparagine 175 is glycosylated (N-linked (GlcNAc...) asparagine). A helical membrane pass occupies residues 199–223 (VGLGVSSTTVGFVVPFTIMLTCYFF). The Cytoplasmic portion of the chain corresponds to 224 to 246 (IAQTIAGHFRKERIEGLRKRRRL). A helical transmembrane segment spans residues 247–270 (LSIIVVLVVTFALCWMPYHLVKTL). At 271 to 289 (YMLGSLLHWPCDFDLFLMN) the chain is on the extracellular side. A helical membrane pass occupies residues 290–312 (IFPYCTCISYVNSCLNPFLYAFF). Residues 313-380 (DPRFRQACTS…PYSQETLVVD (68 aa)) are Cytoplasmic-facing. A compositionally biased stretch (low complexity) spans 342-351 (KSASYSSGHS). Residues 342–380 (KSASYSSGHSQGPGPNMGKGGEQMHEKSIPYSQETLVVD) are disordered. Residues 371–380 (PYSQETLVVD) show a composition bias toward polar residues.

The protein belongs to the G-protein coupled receptor 1 family. As to quaternary structure, homodimer; dimerization inhibits APLNR-mediated G protein and beta-arrestin signaling pathways compared to monomeric APLNR. As to expression, expressed in heart, brain, kidney, stomach, spleen, thymus, lung, ovary, small intestine and colon, adipose tissues and pancreas. Expressed in glial cells, astrocytes and neuronal subpopulations. Expressed in embryonic (ESCs) and induced (iPSCs) pluripotent stem cells.

It is found in the cell membrane. Functionally, g protein-coupled receptor for peptide hormones apelin (APLN) and apelin receptor early endogenous ligand (APELA/ELA), that plays a role in the regulation of normal cardiovascular function and fluid homeostasis. When acting as apelin receptor, activates both G(i) protein pathway that inhibits adenylate cyclase activity, and the beta-arrestin pathway that promotes internalization of the receptor. APLNR/APJ also functions as mechanoreceptor that is activated by pathological stimuli in a G-protein-independent fashion to induce beta-arrestin signaling, hence eliciting cardiac hypertrophy. However, the presence of apelin ligand blunts cardiac hypertrophic induction from APLNR/APJ on response to pathological stimuli. Plays a key role in early development such as gastrulation, blood vessels formation and heart morphogenesis by acting as a APELA receptor. May promote angioblast migration toward the embryonic midline, i.e. the position of the future vessel formation, during vasculogenesis. Promotes sinus venosus (SV)-derived endothelial cells migration into the developing heart to promote coronary blood vessel development. Also plays a role in various processes in adults such as regulation of blood vessel formation, blood pressure, heart contractility and heart failure. Its function is as follows. (Microbial infection) Alternative coreceptor with CD4 for HIV-1 infection; may be involved in the development of AIDS dementia. This is Apelin receptor from Homo sapiens (Human).